The sequence spans 211 residues: Arginine exporter protein ArgO (211 aa).

6 helical membrane passes run 1 to 21, 37 to 57, 68 to 88, 111 to 131, 147 to 167, and 179 to 199; these read MISY…PLGP, LMIA…GIFG, LLAL…FGAL, IIAT…DTFV, WFAL…ALLA, and AQRI…FQLA.

Belongs to the LysE/ArgO transporter (TC 2.A.75) family.

It is found in the cell inner membrane. The catalysed reaction is L-arginine(in) = L-arginine(out). Involved in the export of arginine. Important to control the intracellular level of arginine and the correct balance between arginine and lysine. The chain is Arginine exporter protein ArgO from Salmonella schwarzengrund (strain CVM19633).